We begin with the raw amino-acid sequence, 512 residues long: MVLDLDLFRVDKGGDPALIRETQEKRFKDPGLVDQLVKADSEWRRCRFRADNLNKLKNLCSKTIGEKMKKKEAVGDDESVPENVLNFDDLTADALAALKVSQIKKVRLLIDEAIQKCDGERVKLEAERFENLREIGNLLHPSVPISNDEDADNKVERIWGDCTVRKKYSHVDLVVMVDGFEGEKGAVVAGSRGYFLKGPLVFLEQALIQYALRTLGSRGYTPIYTPFFMRKEVMQEVAQLSQFDEELYKVIGKGSEKSDDNSYDEKYLIATSEQPIAALHRDEWLRPEDLPIKYAGLSTCFRQEVGSHGRDTRGIFRVHQFEKIEQFVYSSPHDNKSWEMFDEMIATAEEFYQSLGIPYHIVNIVSGSLNHAASKKLDLEAWFPGSGAFRELVSCSNCTDYQARRLRIRYGQTKKMMDKVEFVHMLNATMCATTRTICAILENYQAEKGIAVPEKLREFMPPGLQELIPFVKPAPIDQEPSKKQKKQHEGSKKKAKEVPLENQLQSMEVTEA.

Met-1 is modified (N-acetylmethionine). Residues 9 to 61 form an interaction with tRNA region; that stretch reads RVDKGGDPALIRETQEKRFKDPGLVDQLVKADSEWRRCRFRADNLNKLKNLCS. Residue Ser-241 is modified to Phosphoserine. Residues Thr-271 and Arg-302 each coordinate L-serine. Residues 302-304 and 318-321 each bind ATP; these read RQE and VHQF. Lys-323 carries the N6-acetyllysine modification. Glu-325 provides a ligand contact to L-serine. Residue 391–394 coordinates ATP; that stretch reads ELVS. Asn-427 provides a ligand contact to L-serine. The disordered stretch occupies residues 470–512; it reads FVKPAPIDQEPSKKQKKQHEGSKKKAKEVPLENQLQSMEVTEA. The segment covering 479-499 has biased composition (basic and acidic residues); that stretch reads EPSKKQKKQHEGSKKKAKEVP. The short motif at 482–494 is the Nuclear localization signal element; the sequence is KKQKKQHEGSKKK. Positions 502-512 are enriched in polar residues; it reads NQLQSMEVTEA. The residue at position 506 (Ser-506) is a Phosphoserine.

The protein belongs to the class-II aminoacyl-tRNA synthetase family. Type-1 seryl-tRNA synthetase subfamily. In terms of assembly, homodimer. The tRNA molecule may bind across the dimer. Interacts with SIRT2. Interacts with METTL6; interaction is required for the tRNA N(3)-methylcytidine methyltransferase activity of METTL6.

It is found in the cytoplasm. It localises to the nucleus. It catalyses the reaction tRNA(Ser) + L-serine + ATP = L-seryl-tRNA(Ser) + AMP + diphosphate + H(+). It carries out the reaction tRNA(Sec) + L-serine + ATP = L-seryl-tRNA(Sec) + AMP + diphosphate + H(+). It functions in the pathway aminoacyl-tRNA biosynthesis; selenocysteinyl-tRNA(Sec) biosynthesis; L-seryl-tRNA(Sec) from L-serine and tRNA(Sec): step 1/1. Functionally, catalyzes the attachment of serine to tRNA(Ser) in a two-step reaction: serine is first activated by ATP to form Ser-AMP and then transferred to the acceptor end of tRNA(Ser). Is probably also able to aminoacylate tRNA(Sec) with serine, to form the misacylated tRNA L-seryl-tRNA(Sec), which will be further converted into selenocysteinyl-tRNA(Sec). In the nucleus, binds to the VEGFA core promoter and prevents MYC binding and transcriptional activation by MYC. Recruits SIRT2 to the VEGFA promoter, promoting deacetylation of histone H4 at 'Lys-16' (H4K16). Thereby, inhibits the production of VEGFA and sprouting angiogenesis mediated by VEGFA. This Mus musculus (Mouse) protein is Serine--tRNA ligase, cytoplasmic (Sars1).